The primary structure comprises 533 residues: Neuropilin and tolloid-like protein 1 (533 aa).

A signal peptide spans 1-22 (MIYGRSLFHIIASLIILHSSGA). Over 23 to 344 (TKKGTEKQIT…LDQLTNTSGT (322 aa)) the chain is Extracellular. 7 disulfides stabilise this stretch: Cys41–Cys68, Cys96–Cys118, Cys172–Cys202, Cys229–Cys251, Cys292–Cys304, Cys299–Cys317, and Cys311–Cys326. CUB domains are found at residues 41–155 (CGTW…YNFT) and 172–287 (CEFE…FTSF). An LDL-receptor class A domain is found at 291–327 (PCEGNTFFCHSNMCINNTLVCNGLQNCVYPWDENHCK). Residue Asn306 is glycosylated (N-linked (GlcNAc...) asparagine). Asn340 carries an N-linked (GlcNAc...) asparagine glycan. The chain crosses the membrane as a helical span at residues 345 to 365 (VIGVTSCIVIILIIVSVIVQI). At 366 to 533 (KQPRKKYVQR…HESEYNTTRV (168 aa)) the chain is on the cytoplasmic side. A Phosphotyrosine modification is found at Tyr417. The PDZ-binding signature appears at 531–533 (TRV).

As to quaternary structure, interacts with PLZ domains of DLG2, DLG3 and DLG4 via its C-terminal TRV domain. Interacts with GRIN2A and GRIN2B via its CUB domains. Expressed only in brain. Present throughout the central nervous system. Highly expressed in the hippocampal CA3 region, olfactory bulb and tubercle, caudate putamen, and neocortex in the adult brain.

It localises to the membrane. The protein resides in the postsynaptic density membrane. In terms of biological role, involved in the development and/or maintenance of neuronal circuitry. Accessory subunit of the neuronal N-methyl-D-aspartate receptor (NMDAR) critical for maintaining the abundance of GRIN2A-containing NMDARs in the postsynaptic density. Regulates long-term NMDA receptor-dependent synaptic plasticity and cognition, at least in the context of spatial learning and memory. This chain is Neuropilin and tolloid-like protein 1 (Neto1), found in Mus musculus (Mouse).